The sequence spans 166 residues: Early E3 18.5 kDa glycoprotein (166 aa).

An N-terminal signal peptide occupies residues 1-19 (MGPILVLLVLLSLLEPGSA). The Lumenal portion of the chain corresponds to 20-131 (NYDPCLDFDP…SKDNIVTFSI (112 aa)). Asn31 is a glycosylation site (N-linked (GlcNAc...) asparagine; by host). Cystine bridges form between Cys32-Cys50 and Cys44-Cys106. Asn63, Asn67, and Asn97 each carry an N-linked (GlcNAc...) asparagine; by host glycan. Residues 132-152 (AYCLCACLLTALLCVCIHLLV) traverse the membrane as a helical segment. Residues 153–166 (TTRIKNANNKEKMP) lie on the Cytoplasmic side of the membrane. The short motif at 162 to 166 (KEKMP) is the Di-lysine motif element.

The protein belongs to the adenoviridae E19 family. Post-translationally, both disulfide bonds are absolutely critical for the interaction with MHC antigens. In terms of processing, N-glycosylated; high-mannose.

It is found in the host endoplasmic reticulum membrane. Binds and retains class I heavy chains in the endoplasmic reticulum during the early period of virus infection, thereby impairing their transport to the cell surface. Also delays the expression of class I alleles that it cannot affect by direct retention. Binds transporters associated with antigen processing (TAP) and acts as a tapasin inhibitor, preventing class I/TAP association. In consequence, infected cells are masked for immune recognition by cytotoxic T-lymphocytes. The polypeptide is Early E3 18.5 kDa glycoprotein (Human adenovirus B serotype 11 (strain Slobiski) (HAdV-11)).